The chain runs to 702 residues: Elongation factor G 2 (702 aa).

Positions 8-290 constitute a tr-type G domain; the sequence is ERYRNIGISA…AVIDYLPSPV (283 aa). GTP-binding positions include 17-24, 88-92, and 142-145; these read AHIDAGKT, DTPGH, and NKMD.

The protein belongs to the TRAFAC class translation factor GTPase superfamily. Classic translation factor GTPase family. EF-G/EF-2 subfamily.

The protein resides in the cytoplasm. Its function is as follows. Catalyzes the GTP-dependent ribosomal translocation step during translation elongation. During this step, the ribosome changes from the pre-translocational (PRE) to the post-translocational (POST) state as the newly formed A-site-bound peptidyl-tRNA and P-site-bound deacylated tRNA move to the P and E sites, respectively. Catalyzes the coordinated movement of the two tRNA molecules, the mRNA and conformational changes in the ribosome. In Cupriavidus metallidurans (strain ATCC 43123 / DSM 2839 / NBRC 102507 / CH34) (Ralstonia metallidurans), this protein is Elongation factor G 2.